The primary structure comprises 557 residues: Leucine-rich glioma-inactivated protein 1 (557 aa).

The N-terminal stretch at 1–34 (MESESSRRMGNACIPLKRIAYFLCLFSVVLLTEG) is a signal peptide. Residues 35–72 (KKPAKPKCPAVCTCSKDNALCENARSIPRTVPPDVISL) form the LRRNT domain. 3 LRR repeats span residues 92–113 (SLQL…AFIG), 116–137 (HLEY…TFRG), and 140–161 (SLIH…IFKG). Residues 173-223 (NAFNCDCKLKWLVEWLGHTNATVEDIYCEGPPEYKKRKINSLSPKDFDCII) enclose the LRRCT domain. N192 carries an N-linked (GlcNAc...) asparagine glycan. EAR repeat units follow at residues 225–267 (EFAK…EWDH), 271–313 (TFRN…KRDG), 317–364 (KFIK…KWNG), 366–415 (GFYS…QWSK), 419–462 (LFTN…KWGG), 464–506 (SFQD…NWDA), and 510–552 (KFVK…KHVI). N277 carries N-linked (GlcNAc...) asparagine glycosylation. An N-linked (GlcNAc...) asparagine glycan is attached at N422.

In terms of assembly, oligomer. Interacts with KCNA1 within a complex containing KCNA1, KCNA4 and KCNAB1. Part of a complex containing ADAM22, DLG4/PSD95 and CACNG2 (stargazin). Can bind to ADAM11 and ADAM23. Post-translationally, glycosylated. In terms of tissue distribution, expressed in the brain (at protein level). Expressed in cerebellar cortex basket cell terminals (at protein level). Highly expressed in the dentate gyrus and CA3 field of the hippocampus.

It localises to the secreted. Its subcellular location is the synapse. The protein localises to the cytoplasm. It is found in the golgi apparatus. The protein resides in the endoplasmic reticulum. Functionally, regulates voltage-gated potassium channels assembled from KCNA1, KCNA4 and KCNAB1. It slows down channel inactivation by precluding channel closure mediated by the KCNAB1 subunit. Ligand for ADAM22 that positively regulates synaptic transmission mediated by AMPA-type glutamate receptors. Plays a role in suppressing the production of MMP1/3 through the phosphatidylinositol 3-kinase/ERK pathway. The protein is Leucine-rich glioma-inactivated protein 1 of Mus musculus (Mouse).